Reading from the N-terminus, the 508-residue chain is Maturase K (508 aa).

This sequence belongs to the intron maturase 2 family. MatK subfamily.

It is found in the plastid. Its subcellular location is the chloroplast. Functionally, usually encoded in the trnK tRNA gene intron. Probably assists in splicing its own and other chloroplast group II introns. The protein is Maturase K of Ranunculus trichophyllus (Whitewater crowfoot).